A 98-amino-acid chain; its full sequence is Cell division topological specificity factor (98 aa).

Belongs to the MinE family.

In terms of biological role, prevents the cell division inhibition by proteins MinC and MinD at internal division sites while permitting inhibition at polar sites. This ensures cell division at the proper site by restricting the formation of a division septum at the midpoint of the long axis of the cell. The chain is Cell division topological specificity factor from Nitrosomonas europaea (strain ATCC 19718 / CIP 103999 / KCTC 2705 / NBRC 14298).